Consider the following 419-residue polypeptide: Serine hydroxymethyltransferase 1 (419 aa).

(6S)-5,6,7,8-tetrahydrofolate-binding positions include leucine 121 and 125-127 (GHL). Lysine 230 bears the N6-(pyridoxal phosphate)lysine mark. 356 to 358 (SPF) provides a ligand contact to (6S)-5,6,7,8-tetrahydrofolate.

Belongs to the SHMT family. In terms of assembly, homodimer. The cofactor is pyridoxal 5'-phosphate.

The protein resides in the cytoplasm. The enzyme catalyses (6R)-5,10-methylene-5,6,7,8-tetrahydrofolate + glycine + H2O = (6S)-5,6,7,8-tetrahydrofolate + L-serine. It participates in one-carbon metabolism; tetrahydrofolate interconversion. Its pathway is amino-acid biosynthesis; glycine biosynthesis; glycine from L-serine: step 1/1. In terms of biological role, catalyzes the reversible interconversion of serine and glycine with tetrahydrofolate (THF) serving as the one-carbon carrier. This reaction serves as the major source of one-carbon groups required for the biosynthesis of purines, thymidylate, methionine, and other important biomolecules. Also exhibits THF-independent aldolase activity toward beta-hydroxyamino acids, producing glycine and aldehydes, via a retro-aldol mechanism. The protein is Serine hydroxymethyltransferase 1 of Colwellia psychrerythraea (strain 34H / ATCC BAA-681) (Vibrio psychroerythus).